The following is a 315-amino-acid chain: L-lactate dehydrogenase (315 aa).

Residues V14, D35, and Y66 each contribute to the NAD(+) site. Substrate is bound by residues Q83, R89, and 121-124 (NPVD). NAD(+)-binding positions include 119–121 (VAN) and S144. Position 149-152 (149-152 (DTAR)) interacts with substrate. H176 (proton acceptor) is an active-site residue. Y221 is subject to Phosphotyrosine. T230 serves as a coordination point for substrate.

The protein belongs to the LDH/MDH superfamily. LDH family. In terms of assembly, homotetramer.

The protein localises to the cytoplasm. The enzyme catalyses (S)-lactate + NAD(+) = pyruvate + NADH + H(+). It functions in the pathway fermentation; pyruvate fermentation to lactate; (S)-lactate from pyruvate: step 1/1. In terms of biological role, catalyzes the conversion of lactate to pyruvate. The chain is L-lactate dehydrogenase from Mesomycoplasma hyopneumoniae (strain 7448) (Mycoplasma hyopneumoniae).